The primary structure comprises 248 residues: Small ribosomal subunit protein uS2 (248 aa).

It belongs to the universal ribosomal protein uS2 family.

This chain is Small ribosomal subunit protein uS2, found in Herminiimonas arsenicoxydans.